Reading from the N-terminus, the 269-residue chain is Hemin import ATP-binding protein HmuV (269 aa).

An ABC transporter domain is found at 5–242 (LDAEAASFAI…SLIRRVFDIA (238 aa)). ATP is bound at residue 37-44 (GPNGAGKS).

This sequence belongs to the ABC transporter superfamily. Heme (hemin) importer (TC 3.A.1.14.5) family. The complex is composed of two ATP-binding proteins (HmuV), two transmembrane proteins (HmuU) and a solute-binding protein (HmuT).

It localises to the cell inner membrane. Its function is as follows. Part of the ABC transporter complex HmuTUV involved in hemin import. Responsible for energy coupling to the transport system. This is Hemin import ATP-binding protein HmuV from Rhodopseudomonas palustris (strain BisB18).